A 145-amino-acid polypeptide reads, in one-letter code: uncharacterized protein (145 aa).

Disordered regions lie at residues 1–41 and 122–145; these read MRRL…PPGT and RLPSLVHGPSHPDSQHPREVPLAL. Over residues 20-34 the composition is skewed to polar residues; sequence GGPQNGTSGCTTAPQ. A compositionally biased stretch (basic and acidic residues) spans 134 to 145; it reads DSQHPREVPLAL.

Ubiquitous.

This is an uncharacterized protein from Homo sapiens (Human).